The following is a 294-amino-acid chain: Elongation factor Ts (294 aa).

The tract at residues 78–81 is involved in Mg(2+) ion dislocation from EF-Tu; it reads TDFV.

This sequence belongs to the EF-Ts family.

It is found in the cytoplasm. Its function is as follows. Associates with the EF-Tu.GDP complex and induces the exchange of GDP to GTP. It remains bound to the aminoacyl-tRNA.EF-Tu.GTP complex up to the GTP hydrolysis stage on the ribosome. This is Elongation factor Ts from Mycoplasma mobile (strain ATCC 43663 / 163K / NCTC 11711) (Mesomycoplasma mobile).